Here is a 221-residue protein sequence, read N- to C-terminus: Oxaloacetate tautomerase oaa1, mitochondrial (221 aa).

Residues glutamate 59, glutamate 61, and aspartate 93 each coordinate Mg(2+).

It belongs to the FAH family. The cofactor is Mg(2+). Mn(2+) serves as cofactor.

It is found in the mitochondrion. Its subcellular location is the cytoplasm. The catalysed reaction is oxaloacetate = enol-oxaloacetate. In terms of biological role, tautomerase that converts enol-oxaloacetate, a strong inhibitor of succinate dehydrogenase, to the physiological keto form of oxaloacetate. The sequence is that of Oxaloacetate tautomerase oaa1, mitochondrial from Schizosaccharomyces pombe (strain 972 / ATCC 24843) (Fission yeast).